Here is a 541-residue protein sequence, read N- to C-terminus: Glucose-6-phosphate isomerase (541 aa).

The active-site Proton donor is the glutamate 346. Catalysis depends on residues histidine 377 and lysine 506.

Belongs to the GPI family.

The protein resides in the cytoplasm. The enzyme catalyses alpha-D-glucose 6-phosphate = beta-D-fructose 6-phosphate. It functions in the pathway carbohydrate biosynthesis; gluconeogenesis. Its pathway is carbohydrate degradation; glycolysis; D-glyceraldehyde 3-phosphate and glycerone phosphate from D-glucose: step 2/4. Catalyzes the reversible isomerization of glucose-6-phosphate to fructose-6-phosphate. This chain is Glucose-6-phosphate isomerase, found in Sinorhizobium medicae (strain WSM419) (Ensifer medicae).